The chain runs to 569 residues: Santalene synthase (569 aa).

(2E)-geranyl diphosphate-binding residues include arginine 284, aspartate 321, aspartate 325, and arginine 460. Residues aspartate 321 and aspartate 325 each contribute to the Mg(2+) site. The DDXXD motif signature appears at aspartate 321–aspartate 325. 3 residues coordinate Mg(2+): asparagine 463, threonine 467, and glutamate 471.

The protein belongs to the terpene synthase family. Tpsb subfamily. The cofactor is Mg(2+). It depends on Mn(2+) as a cofactor.

The catalysed reaction is (2E,6E)-farnesyl diphosphate = (1S,5S,6R)-alpha-bergamotene + diphosphate. It catalyses the reaction (2E,6E)-farnesyl diphosphate = (+)-alpha-santalene + diphosphate. The enzyme catalyses (2E,6E)-farnesyl diphosphate = (-)-beta-santalene + diphosphate. In terms of biological role, catalyzes a mixture of sesquiterpenoids from (2E,6E)-farnesyl diphosphate in fragrance biosynthesis. Catalyzes the formation of alpha-santalene, beta-santalene, epi-beta-santalene and exo-alpha-bergamotene, as well as traces of alpha-farnesene and beta-farnesene. Also acts with (Z,Z)-farnesyl diphosphate isomer, producing alpha-endo-bergamotene, alpha-santalene, (Z)-beta-farnesene, epi-beta-santalene, and beta-santalene. This Santalum album (White sandalwood) protein is Santalene synthase.